We begin with the raw amino-acid sequence, 476 residues long: H2.0-like homeobox protein (476 aa).

Disordered stretches follow at residues 121–170 (HLPQ…SSKD), 328–401 (WRHS…HQTT), and 413–476 (TASS…LAGL). Low complexity predominate over residues 158–168 (HHSGSAPAPSS). The homeobox DNA-binding region spans 273 to 332 (RSWSRAVFSNLQRKGLEKRFEIQKYVTKPDRKQLAAMLGLTDAQVKVWFQNRRMKWRHSK). 2 stretches are compositionally biased toward basic and acidic residues: residues 331–346 (SKEA…EAGE) and 355–368 (EGER…RSEG). Residues 369–379 (EAESESSDSES) are compositionally biased toward acidic residues. Over residues 386–397 (DTERTEGTERSL) the composition is skewed to basic and acidic residues. A compositionally biased stretch (low complexity) spans 413–446 (TASSSASGSSFSFSSSSSLGSSNGSAGSASSLGS). The segment covering 455 to 464 (HQPSVTSGPQ) has biased composition (polar residues).

Belongs to the H2.0 homeobox family.

It localises to the nucleus. In terms of biological role, transcription factor required for TBX21/T-bet-dependent maturation of Th1 cells as well as maintenance of Th1-specific gene expression. Involved in embryogenesis and hematopoiesis. The polypeptide is H2.0-like homeobox protein (Hlx) (Rattus norvegicus (Rat)).